The sequence spans 802 residues: G-type lectin S-receptor-like serine/threonine-protein kinase At1g61550 (802 aa).

A signal peptide spans 1–19; the sequence is MTRFACFLFSTLLLSFSYA. In terms of domain architecture, Bulb-type lectin spans 20–139; it reads AITPTSPLSI…VSGITLWQSF (120 aa). Topologically, residues 20–421 are extracellular; sequence AITPTSPLSI…EMGGNQRKKT (402 aa). N-linked (GlcNAc...) asparagine glycosylation is found at Asn-48, Asn-89, Asn-112, Asn-231, and Asn-262. The region spanning 273–309 is the EGF-like domain; it reads PANTCDFYGVCGPFGLCVMSIPPKCKCFKGFVPQFSE. 2 disulfide bridges follow: Cys-277-Cys-289 and Cys-283-Cys-297. N-linked (GlcNAc...) asparagine glycans are attached at residues Asn-315, Asn-331, and Asn-370. Residues 328–410 enclose the PAN domain; that stretch reads CQGNSTGRHV…GELLSIRLAS (83 aa). 2 cysteine pairs are disulfide-bonded: Cys-363–Cys-384 and Cys-367–Cys-373. A helical membrane pass occupies residues 422-442; it reads IIASIVSISLFVTLASAAFGF. At 443–802 the chain is on the cytoplasmic side; the sequence is WRYRLKHNAI…EVTQSVVLGR (360 aa). Residues 489-774 form the Protein kinase domain; it reads FSLVNKLGQG…DLPLPKEPTF (286 aa). Residues 495–503 and Lys-517 each bind ATP; that span reads LGQGGFGPV. A phosphoserine mark is found at Ser-523 and Ser-538. A caM-binding region spans residues 578 to 595; sequence RKRVEIDWPKRFSIIQGI. Residue Asp-614 is the Proton acceptor of the active site. Residues Ser-618 and Ser-631 each carry the phosphoserine modification. Thr-648 bears the Phosphothreonine mark. Ser-691 is subject to Phosphoserine.

It belongs to the protein kinase superfamily. Ser/Thr protein kinase family.

Its subcellular location is the cell membrane. It carries out the reaction L-seryl-[protein] + ATP = O-phospho-L-seryl-[protein] + ADP + H(+). It catalyses the reaction L-threonyl-[protein] + ATP = O-phospho-L-threonyl-[protein] + ADP + H(+). The protein is G-type lectin S-receptor-like serine/threonine-protein kinase At1g61550 of Arabidopsis thaliana (Mouse-ear cress).